We begin with the raw amino-acid sequence, 565 residues long: Probable alpha-L-arabinofuranosidase A (565 aa).

The N-terminal stretch at 1-19 (MPLSAAIKSSLSVSVRADA) is a signal peptide. N-linked (GlcNAc...) asparagine glycans are attached at residues asparagine 71, asparagine 91, asparagine 128, asparagine 303, asparagine 362, asparagine 486, and asparagine 501.

It belongs to the glycosyl hydrolase 51 family.

It localises to the secreted. It carries out the reaction Hydrolysis of terminal non-reducing alpha-L-arabinofuranoside residues in alpha-L-arabinosides.. It functions in the pathway glycan metabolism; L-arabinan degradation. Its function is as follows. Alpha-L-arabinofuranosidase involved in the degradation of arabinoxylan, a major component of plant hemicellulose. Acts only on small linear 1,5-alpha-linked L-arabinofuranosyl oligosaccharides. This chain is Probable alpha-L-arabinofuranosidase A (abfA), found in Emericella nidulans (strain FGSC A4 / ATCC 38163 / CBS 112.46 / NRRL 194 / M139) (Aspergillus nidulans).